A 378-amino-acid polypeptide reads, in one-letter code: Cytochrome b (378 aa).

4 consecutive transmembrane segments (helical) span residues Phe-34–Met-54, Trp-78–Val-99, Trp-114–Leu-134, and Phe-179–Leu-199. The heme b site is built by His-84 and His-98. Residues His-183 and His-197 each contribute to the heme b site. His-202 provides a ligand contact to a ubiquinone. 4 helical membrane-spanning segments follow: residues Phe-227–Ser-247, Leu-289–Asn-309, Ile-321–Ala-341, and Tyr-348–Leu-368.

It belongs to the cytochrome b family. The main subunits of complex b-c1 are: cytochrome b, cytochrome c1 and the Rieske protein. Heme b is required as a cofactor.

It is found in the mitochondrion inner membrane. Functionally, component of the ubiquinol-cytochrome c reductase complex (complex III or cytochrome b-c1 complex) that is part of the mitochondrial respiratory chain. The b-c1 complex mediates electron transfer from ubiquinol to cytochrome c. Contributes to the generation of a proton gradient across the mitochondrial membrane that is then used for ATP synthesis. This Drosophila melanogaster (Fruit fly) protein is Cytochrome b (mt:Cyt-b).